Consider the following 230-residue polypeptide: Thiamine-triphosphatase (230 aa).

Alanine 2 carries the post-translational modification N-acetylalanine. The CYTH domain maps to leucine 5–phenylalanine 201. Residues glutamate 7 and glutamate 9 each contribute to the Mg(2+) site. Lysine 11, arginine 55, arginine 57, lysine 65, and arginine 125 together coordinate substrate. Residues aspartate 145, glutamate 157, and glutamate 159 each coordinate Mg(2+). Glutamate 157 contributes to the substrate binding site. Lysine 193 provides a ligand contact to substrate.

Belongs to the ThTPase family. In terms of assembly, monomer. Mg(2+) is required as a cofactor. As to expression, widely expressed but at a low level.

The protein localises to the cytoplasm. The enzyme catalyses thiamine triphosphate + H2O = thiamine diphosphate + phosphate + H(+). Functionally, hydrolase highly specific for thiamine triphosphate (ThTP). In Homo sapiens (Human), this protein is Thiamine-triphosphatase (THTPA).